A 93-amino-acid chain; its full sequence is MNAFSIILLLLSVLLINAQFQPRTSNRGTIFRPMTRNSGIVGRRGGPVAPAPFRNNVQKPGTRPPGFKPPSGVAKKLNSAVDFRALARVLLKQ.

Residues 26–73 (NRGTIFRPMTRNSGIVGRRGGPVAPAPFRNNVQKPGTRPPGFKPPSGV) are disordered.

This is an uncharacterized protein from Caenorhabditis elegans.